We begin with the raw amino-acid sequence, 374 residues long: Peptide chain release factor 2 (374 aa).

N5-methylglutamine is present on Gln250.

This sequence belongs to the prokaryotic/mitochondrial release factor family. Post-translationally, methylated by PrmC. Methylation increases the termination efficiency of RF2.

Its subcellular location is the cytoplasm. Peptide chain release factor 2 directs the termination of translation in response to the peptide chain termination codons UGA and UAA. The sequence is that of Peptide chain release factor 2 from Roseobacter denitrificans (strain ATCC 33942 / OCh 114) (Erythrobacter sp. (strain OCh 114)).